A 534-amino-acid chain; its full sequence is ATP synthase subunit alpha (534 aa).

170-177 (GDRQTGKT) is a binding site for ATP. Residues 505-534 (HEDARVKSETAQAAGKDKDEKAAATAGAGK) form a disordered region.

The protein belongs to the ATPase alpha/beta chains family. In terms of assembly, F-type ATPases have 2 components, CF(1) - the catalytic core - and CF(0) - the membrane proton channel. CF(1) has five subunits: alpha(3), beta(3), gamma(1), delta(1), epsilon(1). CF(0) has three main subunits: a(1), b(2) and c(9-12). The alpha and beta chains form an alternating ring which encloses part of the gamma chain. CF(1) is attached to CF(0) by a central stalk formed by the gamma and epsilon chains, while a peripheral stalk is formed by the delta and b chains.

It is found in the cell inner membrane. The catalysed reaction is ATP + H2O + 4 H(+)(in) = ADP + phosphate + 5 H(+)(out). Its function is as follows. Produces ATP from ADP in the presence of a proton gradient across the membrane. The alpha chain is a regulatory subunit. The protein is ATP synthase subunit alpha of Acidobacterium capsulatum (strain ATCC 51196 / DSM 11244 / BCRC 80197 / JCM 7670 / NBRC 15755 / NCIMB 13165 / 161).